The primary structure comprises 642 residues: Influenza virus NS1A-binding protein (642 aa).

One can recognise a BTB domain in the interval methionine 1–valine 131. One can recognise a BACK domain in the interval threonine 132–proline 350. Residues isoleucine 164–glycine 368 are sufficient for AHR interaction and signaling. 5 positions are modified to phosphoserine: serine 246, serine 277, serine 322, serine 336, and serine 338. The interval lysine 257–threonine 281 is disordered. The segment covering lysine 265–threonine 281 has biased composition (polar residues). Kelch repeat units lie at residues threonine 384–glycine 421, cysteine 432–glycine 469, asparagine 481–glycine 518, asparagine 527–glycine 565, cysteine 575–glycine 612, and threonine 622–phenylalanine 642.

This sequence belongs to the BTB-kelch protein family. As to quaternary structure, homodimer; through the BTB domain. Interacts with AHR/Aryl hydrocarbon receptor. Interacts (via BACK domain) with pre-mRNA-binding protein HNRNPK; the interaction is direct. Interacts (via BACK domain) with splicing factor PTBP1; the interaction is direct. Interacts (via Kelch repeats) with RNA polymerase POLR2A (via C-terminal domain). Interacts (via BACK domain) with splicing factor SNRPA; the interaction is indirect. Interacts (via Kelch repeats) with splicing factor SART1. Interacts (via BACK domain) with ALYREF; the interaction is indirect and likely plays a role in mRNA nuclear export. Interacts (via Kelch repeats) with KLHL20 (via Kelch repeats); this interaction blocks the assembly of Cul3-KLHL20 complex. (Microbial infection) Interacts (via BACK domain) with influenza A virus non-structural protein 1 (NS1); the interaction is direct and bridges the interaction between NS1 and HNRNPK.

It localises to the cytoplasm. Its subcellular location is the cytoskeleton. The protein resides in the nucleus. The protein localises to the nucleoplasm. Its function is as follows. Involved in many cell functions, including pre-mRNA splicing, the aryl hydrocarbon receptor (AHR) pathway, F-actin organization and protein ubiquitination. Plays a role in the dynamic organization of the actin skeleton as a stabilizer of actin filaments by association with F-actin through Kelch repeats. Protects cells from cell death induced by actin destabilization. Functions as modifier of the AHR/Aryl hydrocarbon receptor pathway increasing the concentration of AHR available to activate transcription. In addition, functions as a negative regulator of BCR(KLHL20) E3 ubiquitin ligase complex to prevent ubiquitin-mediated proteolysis of PML and DAPK1, two tumor suppressors. Inhibits pre-mRNA splicing (in vitro). May play a role in mRNA nuclear export. (Microbial infection) Involved in the alternative splicing of influenza A virus M1 mRNA through interaction with HNRNPK, thereby facilitating the generation of viral M2 protein. The BTB and Kelch domains are required for splicing activity. Promotes export of viral M mRNA and RNP via its interaction with mRNA export factor ALYREF. The chain is Influenza virus NS1A-binding protein from Homo sapiens (Human).